We begin with the raw amino-acid sequence, 230 residues long: Large ribosomal subunit protein uL1 (230 aa).

It belongs to the universal ribosomal protein uL1 family. Part of the 50S ribosomal subunit.

Its function is as follows. Binds directly to 23S rRNA. The L1 stalk is quite mobile in the ribosome, and is involved in E site tRNA release. Protein L1 is also a translational repressor protein, it controls the translation of the L11 operon by binding to its mRNA. The sequence is that of Large ribosomal subunit protein uL1 from Leptospira borgpetersenii serovar Hardjo-bovis (strain JB197).